A 306-amino-acid chain; its full sequence is Ribonuclease Z (306 aa).

Zn(2+) is bound by residues H63, H65, D67, H68, H141, D211, and H269. D67 (proton acceptor) is an active-site residue.

The protein belongs to the RNase Z family. Homodimer. Zn(2+) serves as cofactor.

It carries out the reaction Endonucleolytic cleavage of RNA, removing extra 3' nucleotides from tRNA precursor, generating 3' termini of tRNAs. A 3'-hydroxy group is left at the tRNA terminus and a 5'-phosphoryl group is left at the trailer molecule.. Its function is as follows. Zinc phosphodiesterase, which displays some tRNA 3'-processing endonuclease activity. Probably involved in tRNA maturation, by removing a 3'-trailer from precursor tRNA. The polypeptide is Ribonuclease Z (Staphylococcus carnosus (strain TM300)).